A 545-amino-acid polypeptide reads, in one-letter code: Tripartite motif-containing protein 26 (545 aa).

The segment at 16–57 (CSICLDYLRDPVTIDCGHVFCRSCTSDIRPISGNRPVCPLCK) adopts an RING-type zinc-finger fold. The segment at 97 to 138 (QDMKLCERHQEKLHYYCEDDGKLLCVMCRESREHRPHTAVLV) adopts a B box-type zinc-finger fold. Positions 102, 105, 124, and 130 each coordinate Zn(2+). The stretch at 197–243 (QFLKKREQHLLDQLATLEQLLTEGREKFKTRGVSELDRLTLVISELE) forms a coiled coil. Positions 301 to 545 (RGLRQFQGKL…WPGARLLLRP (245 aa)) constitute a B30.2/SPRY domain. The disordered stretch occupies residues 382-443 (REGWSEDEEE…EEEEEVQESC (62 aa)). Residues 386 to 440 (SEDEEEGEEEEEGEEEEEDEEVGYGDGYEDWETDEEDESLGEEEEEEEEEEEEVQ) show a composition bias toward acidic residues.

The protein belongs to the TRIM/RBCC family. In terms of assembly, interacts with TBK1; this interaction bridges together TBK1 and NEMO in order to activate TBK1. Interacts with INCA1. Post-translationally, autoubiquitinates upon viral infection. In turn, autoubiquitinated TRIM26 recruits NEMO and bridges TBK1-NEMO interaction.

The protein localises to the cytoplasm. The protein resides in the nucleus. It carries out the reaction S-ubiquitinyl-[E2 ubiquitin-conjugating enzyme]-L-cysteine + [acceptor protein]-L-lysine = [E2 ubiquitin-conjugating enzyme]-L-cysteine + N(6)-ubiquitinyl-[acceptor protein]-L-lysine.. Its function is as follows. E3 ubiquitin-protein ligase which regulates the IFN-beta production and antiviral response downstream of various DNA-encoded pattern-recognition receptors (PRRs). Also plays a central role in determining the response to different forms of oxidative stress by controlling levels of DNA glycosylases NEIL1, NEIL3 and NTH1 that are involved in repair of damaged DNA. Promotes nuclear IRF3 ubiquitination and proteasomal degradation. Bridges together TBK1 and NEMO during the innate response to viral infection leading to the activation of TBK1. Positively regulates LPS-mediated inflammatory innate immune response by catalyzing the 'Lys-11'-linked polyubiquitination of TAB1 to enhance its activation and subsequent NF-kappa-B and MAPK signaling. In a manner independent of its catalytic activity, inhibits WWP2, a SOX2-directed E3 ubiquitin ligase, and thus protects SOX2 from polyubiquitination and proteasomal degradation. Ubiquitinates the histone acetyltransferase protein complex component PHF20 and thereby triggers its degradation in the nucleus after its recruitment by the histone demethylase KDM6B, serving as a scaffold protein. Upon induction by TGF-beta, ubiquitinates the TFIID component TAF7 for proteasomal degradation. Induces ferroptosis by ubiquitinating SLC7A11, a critical protein for lipid reactive oxygen species (ROS) scavenging. The protein is Tripartite motif-containing protein 26 (Trim26) of Mus musculus (Mouse).